Reading from the N-terminus, the 346-residue chain is MSTAPVTLALMKEILGRVAVGASLSETQAEEVFEIIMSGDATPAQIGGLLLGLRVRGETVEEITGAARIMRAKALKIEAPPGSVDIVGTGGDEAGTFNISTAASFVVAACGVPVAKHGNRAVSSKSGASDVLTALGVNIDADFALVHETLWENKVGFLMAPRHHNAMRHVAGPRGELGTRTIFNLLGPLSNPAGTTRQVVGVFAERWVEPLARVLGRLGAEHAWVVHGTDGLDELTTTGPTRVAEYKGGEVRLFSVTPEEVGLKRAAPADLKGGDSATNAAAMKALLKGEQGAYRDIVVLNAAAALVVAGKVDTLGDGARAAEQAIDRGEAEAVLHRMIAITNRTS.

5-phospho-alpha-D-ribose 1-diphosphate-binding positions include G88, G91 to D92, T96, N98 to T101, K116 to S124, and A128. G88 provides a ligand contact to anthranilate. S100 contacts Mg(2+). Anthranilate is bound at residue N119. Position 174 (R174) interacts with anthranilate. 2 residues coordinate Mg(2+): D233 and E234.

This sequence belongs to the anthranilate phosphoribosyltransferase family. As to quaternary structure, homodimer. The cofactor is Mg(2+).

It carries out the reaction N-(5-phospho-beta-D-ribosyl)anthranilate + diphosphate = 5-phospho-alpha-D-ribose 1-diphosphate + anthranilate. It participates in amino-acid biosynthesis; L-tryptophan biosynthesis; L-tryptophan from chorismate: step 2/5. In terms of biological role, catalyzes the transfer of the phosphoribosyl group of 5-phosphorylribose-1-pyrophosphate (PRPP) to anthranilate to yield N-(5'-phosphoribosyl)-anthranilate (PRA). In Paramagnetospirillum magneticum (strain ATCC 700264 / AMB-1) (Magnetospirillum magneticum), this protein is Anthranilate phosphoribosyltransferase.